Here is a 436-residue protein sequence, read N- to C-terminus: Trigger factor (436 aa).

The 86-residue stretch at 163-248 (GDRVVLDFAG…VKEVAEGVLP (86 aa)) folds into the PPIase FKBP-type domain.

Belongs to the FKBP-type PPIase family. Tig subfamily.

The protein resides in the cytoplasm. It carries out the reaction [protein]-peptidylproline (omega=180) = [protein]-peptidylproline (omega=0). Its function is as follows. Involved in protein export. Acts as a chaperone by maintaining the newly synthesized protein in an open conformation. Functions as a peptidyl-prolyl cis-trans isomerase. The polypeptide is Trigger factor (Bordetella parapertussis (strain 12822 / ATCC BAA-587 / NCTC 13253)).